A 413-amino-acid polypeptide reads, in one-letter code: Putative acid phosphatase 11 (413 aa).

His35 functions as the Nucleophile in the catalytic mechanism. Asp315 functions as the Proton donor in the catalytic mechanism. Cys381 and Cys387 form a disulfide bridge.

Belongs to the histidine acid phosphatase family.

It catalyses the reaction a phosphate monoester + H2O = an alcohol + phosphate. This chain is Putative acid phosphatase 11 (pho-11), found in Caenorhabditis elegans.